A 311-amino-acid polypeptide reads, in one-letter code: GTP cyclohydrolase FolE2 (311 aa).

Belongs to the GTP cyclohydrolase IV family.

It catalyses the reaction GTP + H2O = 7,8-dihydroneopterin 3'-triphosphate + formate + H(+). It participates in cofactor biosynthesis; 7,8-dihydroneopterin triphosphate biosynthesis; 7,8-dihydroneopterin triphosphate from GTP: step 1/1. In terms of biological role, converts GTP to 7,8-dihydroneopterin triphosphate. This chain is GTP cyclohydrolase FolE2, found in Xanthomonas campestris pv. campestris (strain 8004).